Here is a 557-residue protein sequence, read N- to C-terminus: Dihydroxy-acid dehydratase (557 aa).

Aspartate 78 provides a ligand contact to Mg(2+). Position 119 (cysteine 119) interacts with [2Fe-2S] cluster. Mg(2+) is bound by residues aspartate 120 and lysine 121. Lysine 121 is modified (N6-carboxylysine). Residue cysteine 192 participates in [2Fe-2S] cluster binding. Glutamate 446 is a binding site for Mg(2+). Residue serine 472 is the Proton acceptor of the active site.

It belongs to the IlvD/Edd family. As to quaternary structure, homodimer. Requires [2Fe-2S] cluster as cofactor. Mg(2+) is required as a cofactor.

The catalysed reaction is (2R)-2,3-dihydroxy-3-methylbutanoate = 3-methyl-2-oxobutanoate + H2O. The enzyme catalyses (2R,3R)-2,3-dihydroxy-3-methylpentanoate = (S)-3-methyl-2-oxopentanoate + H2O. It functions in the pathway amino-acid biosynthesis; L-isoleucine biosynthesis; L-isoleucine from 2-oxobutanoate: step 3/4. It participates in amino-acid biosynthesis; L-valine biosynthesis; L-valine from pyruvate: step 3/4. In terms of biological role, functions in the biosynthesis of branched-chain amino acids. Catalyzes the dehydration of (2R,3R)-2,3-dihydroxy-3-methylpentanoate (2,3-dihydroxy-3-methylvalerate) into 2-oxo-3-methylpentanoate (2-oxo-3-methylvalerate) and of (2R)-2,3-dihydroxy-3-methylbutanoate (2,3-dihydroxyisovalerate) into 2-oxo-3-methylbutanoate (2-oxoisovalerate), the penultimate precursor to L-isoleucine and L-valine, respectively. The protein is Dihydroxy-acid dehydratase of Campylobacter curvus (strain 525.92).